The primary structure comprises 76 residues: Small ribosomal subunit protein bS18 (76 aa).

This sequence belongs to the bacterial ribosomal protein bS18 family. Part of the 30S ribosomal subunit. Forms a tight heterodimer with protein bS6.

Its function is as follows. Binds as a heterodimer with protein bS6 to the central domain of the 16S rRNA, where it helps stabilize the platform of the 30S subunit. The protein is Small ribosomal subunit protein bS18 of Ectopseudomonas mendocina (strain ymp) (Pseudomonas mendocina).